The sequence spans 164 residues: Transcription antitermination protein NusB (164 aa).

Belongs to the NusB family.

Functionally, involved in transcription antitermination. Required for transcription of ribosomal RNA (rRNA) genes. Binds specifically to the boxA antiterminator sequence of the ribosomal RNA (rrn) operons. The protein is Transcription antitermination protein NusB of Desulfovibrio desulfuricans (strain ATCC 27774 / DSM 6949 / MB).